A 119-amino-acid polypeptide reads, in one-letter code: Methylglyoxal synthase (119 aa).

One can recognise an MGS-like domain in the interval 1–119 (MKIALIAHDK…ESAKLIMADI (119 aa)). Substrate-binding positions include histidine 8, lysine 12, 34–37 (TGTT), and 54–55 (SG). Catalysis depends on aspartate 60, which acts as the Proton donor/acceptor. Residue histidine 87 coordinates substrate.

Belongs to the methylglyoxal synthase family.

It catalyses the reaction dihydroxyacetone phosphate = methylglyoxal + phosphate. Its function is as follows. Catalyzes the formation of methylglyoxal from dihydroxyacetone phosphate. The protein is Methylglyoxal synthase of Clostridium perfringens (strain 13 / Type A).